Reading from the N-terminus, the 312-residue chain is Ribosomal RNA small subunit methyltransferase H (312 aa).

S-adenosyl-L-methionine is bound by residues Gly30–His32, Asp50, Phe80, Asp98, and Gln105.

This sequence belongs to the methyltransferase superfamily. RsmH family.

The protein resides in the cytoplasm. The catalysed reaction is cytidine(1402) in 16S rRNA + S-adenosyl-L-methionine = N(4)-methylcytidine(1402) in 16S rRNA + S-adenosyl-L-homocysteine + H(+). Its function is as follows. Specifically methylates the N4 position of cytidine in position 1402 (C1402) of 16S rRNA. This is Ribosomal RNA small subunit methyltransferase H from Lawsonia intracellularis (strain PHE/MN1-00).